A 175-amino-acid polypeptide reads, in one-letter code: Adenine phosphoribosyltransferase (175 aa).

The protein belongs to the purine/pyrimidine phosphoribosyltransferase family. As to quaternary structure, homodimer.

It is found in the cytoplasm. It catalyses the reaction AMP + diphosphate = 5-phospho-alpha-D-ribose 1-diphosphate + adenine. It functions in the pathway purine metabolism; AMP biosynthesis via salvage pathway; AMP from adenine: step 1/1. In terms of biological role, catalyzes a salvage reaction resulting in the formation of AMP, that is energically less costly than de novo synthesis. In Francisella tularensis subsp. holarctica (strain FTNF002-00 / FTA), this protein is Adenine phosphoribosyltransferase.